A 171-amino-acid chain; its full sequence is Large ribosomal subunit protein uL10 (171 aa).

The protein belongs to the universal ribosomal protein uL10 family. As to quaternary structure, part of the ribosomal stalk of the 50S ribosomal subunit. The N-terminus interacts with L11 and the large rRNA to form the base of the stalk. The C-terminus forms an elongated spine to which L12 dimers bind in a sequential fashion forming a multimeric L10(L12)X complex.

Functionally, forms part of the ribosomal stalk, playing a central role in the interaction of the ribosome with GTP-bound translation factors. The sequence is that of Large ribosomal subunit protein uL10 from Methylocella silvestris (strain DSM 15510 / CIP 108128 / LMG 27833 / NCIMB 13906 / BL2).